The sequence spans 458 residues: tRNA modification GTPase MnmE (458 aa).

Residues arginine 22, glutamate 84, and arginine 123 each contribute to the (6S)-5-formyl-5,6,7,8-tetrahydrofolate site. In terms of domain architecture, TrmE-type G spans 220-379; it reads GIATAIIGRP…LETAIADLFF (160 aa). Residue asparagine 230 coordinates K(+). GTP is bound by residues 230–235, 249–255, and 274–277; these read NVGKSS, TDIAGTT, and DTAG. Mg(2+) is bound at residue serine 234. K(+)-binding residues include threonine 249, isoleucine 251, and threonine 254. Threonine 255 serves as a coordination point for Mg(2+). (6S)-5-formyl-5,6,7,8-tetrahydrofolate is bound at residue lysine 458.

It belongs to the TRAFAC class TrmE-Era-EngA-EngB-Septin-like GTPase superfamily. TrmE GTPase family. In terms of assembly, homodimer. Heterotetramer of two MnmE and two MnmG subunits. It depends on K(+) as a cofactor.

It is found in the cytoplasm. Functionally, exhibits a very high intrinsic GTPase hydrolysis rate. Involved in the addition of a carboxymethylaminomethyl (cmnm) group at the wobble position (U34) of certain tRNAs, forming tRNA-cmnm(5)s(2)U34. This chain is tRNA modification GTPase MnmE, found in Bacillus cereus (strain ATCC 10987 / NRS 248).